Here is a 178-residue protein sequence, read N- to C-terminus: Riboflavin kinase (178 aa).

Residues Thr-39 and Asn-41 each contribute to the Mg(2+) site. The Nucleophile role is filled by Glu-116.

This sequence belongs to the flavokinase family. Requires Zn(2+) as cofactor. It depends on Mg(2+) as a cofactor.

It carries out the reaction riboflavin + ATP = FMN + ADP + H(+). It participates in cofactor biosynthesis; FMN biosynthesis; FMN from riboflavin (ATP route): step 1/1. Functionally, catalyzes the phosphorylation of riboflavin (vitamin B2) to form flavin mononucleotide (FMN) coenzyme. The chain is Riboflavin kinase (FMN1) from Scheffersomyces stipitis (strain ATCC 58785 / CBS 6054 / NBRC 10063 / NRRL Y-11545) (Yeast).